The chain runs to 359 residues: Uracil-DNA glycosylase (359 aa).

The N-terminal 21 residues, 1 to 21 (MWCMRRLPTNSVMTVARKRKQ), are a transit peptide targeting the mitochondrion. The Proton acceptor role is filled by D162.

It belongs to the uracil-DNA glycosylase (UDG) superfamily. UNG family.

It localises to the mitochondrion. Its subcellular location is the nucleus. It catalyses the reaction Hydrolyzes single-stranded DNA or mismatched double-stranded DNA and polynucleotides, releasing free uracil.. In terms of biological role, excises uracil residues from the DNA which can arise as a result of misincorporation of dUMP residues by DNA polymerase or due to deamination of cytosine. Not involved in strand-directed mismatch repair. In Saccharomyces cerevisiae (strain ATCC 204508 / S288c) (Baker's yeast), this protein is Uracil-DNA glycosylase.